Here is a 363-residue protein sequence, read N- to C-terminus: S-adenosylmethionine:tRNA ribosyltransferase-isomerase (363 aa).

The protein belongs to the QueA family. In terms of assembly, monomer.

Its subcellular location is the cytoplasm. It catalyses the reaction 7-aminomethyl-7-carbaguanosine(34) in tRNA + S-adenosyl-L-methionine = epoxyqueuosine(34) in tRNA + adenine + L-methionine + 2 H(+). Its pathway is tRNA modification; tRNA-queuosine biosynthesis. Its function is as follows. Transfers and isomerizes the ribose moiety from AdoMet to the 7-aminomethyl group of 7-deazaguanine (preQ1-tRNA) to give epoxyqueuosine (oQ-tRNA). The sequence is that of S-adenosylmethionine:tRNA ribosyltransferase-isomerase from Synechococcus sp. (strain RCC307).